Reading from the N-terminus, the 468-residue chain is Glutamate--tRNA ligase (468 aa).

A 'HIGH' region motif is present at residues 11–21 (PSPTGFIHLGN). Positions 243-247 (KMSKR) match the 'KMSKS' region motif. Residue lysine 246 coordinates ATP.

It belongs to the class-I aminoacyl-tRNA synthetase family. Glutamate--tRNA ligase type 1 subfamily. As to quaternary structure, monomer.

The protein resides in the cytoplasm. It catalyses the reaction tRNA(Glu) + L-glutamate + ATP = L-glutamyl-tRNA(Glu) + AMP + diphosphate. In terms of biological role, catalyzes the attachment of glutamate to tRNA(Glu) in a two-step reaction: glutamate is first activated by ATP to form Glu-AMP and then transferred to the acceptor end of tRNA(Glu). The sequence is that of Glutamate--tRNA ligase from Delftia acidovorans (strain DSM 14801 / SPH-1).